A 165-amino-acid chain; its full sequence is uncharacterized protein (165 aa).

This is an uncharacterized protein from Homo sapiens (Human).